The sequence spans 186 residues: High mobility group protein B4 (186 aa).

2 consecutive DNA-binding regions (HMG box) follow at residues 9-79 (PKAN…MNYV) and 93-161 (PRRP…ELYR). The interval 77–98 (NYVGKRKKRRKRDPQEPRRPPS) is disordered.

The protein belongs to the HMGB family.

The protein localises to the nucleus. The protein resides in the chromosome. The polypeptide is High mobility group protein B4 (HMGB4) (Homo sapiens (Human)).